Reading from the N-terminus, the 336-residue chain is tRNA N6-adenosine threonylcarbamoyltransferase (336 aa).

Fe cation is bound by residues His-108 and His-112. Residues 129–133 (LISGG), Asp-161, Glu-178, and Ser-258 each bind substrate. Residue Asp-286 coordinates Fe cation.

It belongs to the KAE1 / TsaD family. Requires Fe(2+) as cofactor.

It is found in the cytoplasm. It catalyses the reaction L-threonylcarbamoyladenylate + adenosine(37) in tRNA = N(6)-L-threonylcarbamoyladenosine(37) in tRNA + AMP + H(+). In terms of biological role, required for the formation of a threonylcarbamoyl group on adenosine at position 37 (t(6)A37) in tRNAs that read codons beginning with adenine. Is probably involved in the transfer of the threonylcarbamoyl moiety of threonylcarbamoyl-AMP (TC-AMP) to the N6 group of A37. The sequence is that of tRNA N6-adenosine threonylcarbamoyltransferase from Pyrobaculum neutrophilum (strain DSM 2338 / JCM 9278 / NBRC 100436 / V24Sta) (Thermoproteus neutrophilus).